The primary structure comprises 207 residues: Ras-related protein rab7 (207 aa).

Residues 15 to 22 (GDSGVGKT), 34 to 40 (SNQYKAT), 63 to 67 (DTAGQ), 125 to 128 (NKID), and 156 to 157 (AK) each bind GTP. The Effector region motif lies at 37–45 (YKATIGADF). 2 S-geranylgeranyl cysteine lipidation sites follow: Cys-205 and Cys-207. A Cysteine methyl ester modification is found at Cys-207.

Belongs to the small GTPase superfamily. Rab family. (Microbial infection) Interacts with Singapore grouper iridoviral proteins VP69 (ORF69) and VP101 (ORF101). As to expression, ubiquitously expressed. Expressed in liver, spleen, kidney, brain, intestine, heart, skin, muscle, gill and stomach.

Its subcellular location is the late endosome membrane. The protein resides in the lysosome membrane. Key regulator in endo-lysosomal trafficking. Governs early-to-late endosomal maturation, microtubule minus-end as well as plus-end directed endosomal migration and positioning, and endosome-lysosome transport through different protein-protein interaction cascades. Plays important roles in microbial pathogen infection and survival, as well as in participating in the life cycle of viruses. The polypeptide is Ras-related protein rab7 (Epinephelus coioides (Orange-spotted grouper)).